Reading from the N-terminus, the 300-residue chain is Geranyl diphosphate 2-C-methyltransferase (300 aa).

The interval 1–24 (MAAASAPVPGPGGASSTARGRIPA) is disordered.

This sequence belongs to the geranyl diphosphate 2-C-methyltransferase family. The cofactor is Mg(2+).

It catalyses the reaction (2E)-geranyl diphosphate + S-adenosyl-L-methionine = (E)-2-methylgeranyl diphosphate + S-adenosyl-L-homocysteine + H(+). In terms of biological role, catalyzes the SAM-dependent methylation of geranyl diphosphate (GPP) to yield (E)-2-methylgeranyl diphosphate (2-MeGPP). This chain is Geranyl diphosphate 2-C-methyltransferase (gdpmt), found in Streptomyces lasalocidi (Streptomyces lasaliensis).